Reading from the N-terminus, the 415-residue chain is Multidrug resistance protein MdtA (415 aa).

An N-terminal signal peptide occupies residues 1–21; it reads MKGSYKSRWVIVIVVVIAAIA. Disordered stretches follow at residues 32–60 and 392–415; these read SRSA…GPLA and EAQS…GARS. The span at 399–415 shows a compositional bias: basic and acidic residues; that stretch reads PEEKATSREYAKKGARS.

This sequence belongs to the membrane fusion protein (MFP) (TC 8.A.1) family. In terms of assembly, part of a tripartite efflux system composed of MdtA, MdtB and MdtC.

The protein localises to the cell inner membrane. Functionally, the MdtABC tripartite complex confers resistance against novobiocin and deoxycholate. The polypeptide is Multidrug resistance protein MdtA (Escherichia coli (strain K12 / MC4100 / BW2952)).